The chain runs to 248 residues: 3-deoxy-manno-octulosonate cytidylyltransferase 2 (248 aa).

Belongs to the KdsB family.

Its subcellular location is the cytoplasm. The enzyme catalyses 3-deoxy-alpha-D-manno-oct-2-ulosonate + CTP = CMP-3-deoxy-beta-D-manno-octulosonate + diphosphate. The protein operates within nucleotide-sugar biosynthesis; CMP-3-deoxy-D-manno-octulosonate biosynthesis; CMP-3-deoxy-D-manno-octulosonate from 3-deoxy-D-manno-octulosonate and CTP: step 1/1. It functions in the pathway bacterial outer membrane biogenesis; lipopolysaccharide biosynthesis. Its function is as follows. Activates KDO (a required 8-carbon sugar) for incorporation into bacterial lipopolysaccharide in Gram-negative bacteria. This chain is 3-deoxy-manno-octulosonate cytidylyltransferase 2, found in Hydrogenovibrio crunogenus (strain DSM 25203 / XCL-2) (Thiomicrospira crunogena).